Reading from the N-terminus, the 518-residue chain is Cytochrome P450 82E3 (518 aa).

Residues Val-2 to Trp-22 form a helical membrane-spanning segment. A Glycyl lysine isopeptide (Lys-Gly) (interchain with G-Cter in ubiquitin) cross-link involves residue Lys-254. Cys-458 contributes to the heme binding site.

The protein belongs to the cytochrome P450 family. CYP82E2 subfamily. The cofactor is heme. Expressed at low levels in green leaves.

The protein resides in the membrane. Its pathway is alkaloid biosynthesis; nicotine biosynthesis. No nicotine N-demethylase activity. This Nicotiana tabacum (Common tobacco) protein is Cytochrome P450 82E3.